The chain runs to 215 residues: Small ribosomal subunit protein uS7 (215 aa).

Belongs to the universal ribosomal protein uS7 family. Part of the 30S ribosomal subunit.

In terms of biological role, one of the primary rRNA binding proteins, it binds directly to 16S rRNA where it nucleates assembly of the head domain of the 30S subunit. Is located at the subunit interface close to the decoding center. This chain is Small ribosomal subunit protein uS7, found in Pyrococcus furiosus (strain ATCC 43587 / DSM 3638 / JCM 8422 / Vc1).